A 621-amino-acid chain; its full sequence is MBT domain-containing protein 1 (621 aa).

Over residues 1–21 (MEKTKDPADRSSRSERKRRDS) the composition is skewed to basic and acidic residues. Positions 1 to 55 (MEKTKDPADRSSRSERKRRDSFGMFDGYDSCSEDTSSSSSSDESEEEVAPLPSSL) are disordered. Over residues 29-41 (DSCSEDTSSSSSS) the composition is skewed to low complexity. The FCS-type zinc finger occupies 68–103 (PDGKSGMATCEMCGMVGVRDAFYSKTKRFCSVSCSR). The Zn(2+) site is built by C77, C80, C97, and C101. 4 MBT repeats span residues 164–268 (FSWG…LVPP), 276–373 (TNWK…IGHR), 374–479 (FKRT…LTPP), and 487–583 (FKWF…LQPP). The interval 581–621 (QPPAPQSNKDGQSNVSKQKKKSKSQPYKGHKKNFRKPGNRP) is disordered. Basic residues predominate over residues 597 to 621 (KQKKKSKSQPYKGHKKNFRKPGNRP).

In terms of assembly, monomer. Component of the NuA4 histone acetyltransferase complex.

The protein localises to the nucleus. It localises to the chromosome. Its function is as follows. Chromatin reader component of the NuA4 histone acetyltransferase complex, a multiprotein complex involved in transcriptional activation of select genes principally by acetylation of nucleosomal histones H4 and H2A. The NuA4 complex plays a direct role in repair of DNA double-strand breaks (DSBs) by promoting homologous recombination (HR). MBTD1 specifically recognizes and binds monomethylated and dimethylated 'Lys-20' on histone H4 (H4K20me1 and H4K20me2, respectively). In the NuA4 complex, MBTD1 promotes recruitment of the complex to H4K20me marks by competing with TP53BP1 for binding to H4K20me. Following recruitment to H4K20me at DNA breaks, the NuA4 complex catalyzes acetylation of 'Lys-15' on histone H2A (H2AK15), blocking the ubiquitination mark required for TP53BP1 localization at DNA breaks, thereby promoting homologous recombination (HR). The sequence is that of MBT domain-containing protein 1 from Xenopus laevis (African clawed frog).